The sequence spans 88 residues: Exodeoxyribonuclease 7 small subunit (88 aa).

The segment at 68–88 (SDPMHPDDGEPFDPSLVSTSQ) is disordered.

It belongs to the XseB family. Heterooligomer composed of large and small subunits.

Its subcellular location is the cytoplasm. It carries out the reaction Exonucleolytic cleavage in either 5'- to 3'- or 3'- to 5'-direction to yield nucleoside 5'-phosphates.. Functionally, bidirectionally degrades single-stranded DNA into large acid-insoluble oligonucleotides, which are then degraded further into small acid-soluble oligonucleotides. The protein is Exodeoxyribonuclease 7 small subunit of Xylella fastidiosa (strain 9a5c).